Consider the following 420-residue polypeptide: Tol-Pal system protein TolB (420 aa).

The signal sequence occupies residues 1 to 21 (MKLFVHLVLFISLFIPYFTKA).

This sequence belongs to the TolB family. In terms of assembly, the Tol-Pal system is composed of five core proteins: the inner membrane proteins TolA, TolQ and TolR, the periplasmic protein TolB and the outer membrane protein Pal. They form a network linking the inner and outer membranes and the peptidoglycan layer.

It is found in the periplasm. Functionally, part of the Tol-Pal system, which plays a role in outer membrane invagination during cell division and is important for maintaining outer membrane integrity. This Wolbachia sp. subsp. Drosophila simulans (strain wRi) protein is Tol-Pal system protein TolB.